A 253-amino-acid polypeptide reads, in one-letter code: MLASRVIPCLDIDHGRVVKGVQFVALRDAGDPVEVAKRYNDEGADEITFLDISASYEERGTLADMVSAVAAQVFIPLTVGGGVRCVEDIRTLLLAGADKVSINSAAVNDPELVRAAARRFGNSCIVVAIDAKRVEDHWEVFTHGGRRGTGLDAVAWAQRMAAYGAGEILLTSMDRDGTGIGFDLALTRAISDAVPVPVIASGGVGEIRHFVEGIQQGRADAVLAASVFHFGQFRISEVKARMAAAGIPVRTTR.

Residues D11 and D130 contribute to the active site.

This sequence belongs to the HisA/HisF family. Heterodimer of HisH and HisF.

The protein localises to the cytoplasm. It catalyses the reaction 5-[(5-phospho-1-deoxy-D-ribulos-1-ylimino)methylamino]-1-(5-phospho-beta-D-ribosyl)imidazole-4-carboxamide + L-glutamine = D-erythro-1-(imidazol-4-yl)glycerol 3-phosphate + 5-amino-1-(5-phospho-beta-D-ribosyl)imidazole-4-carboxamide + L-glutamate + H(+). The protein operates within amino-acid biosynthesis; L-histidine biosynthesis; L-histidine from 5-phospho-alpha-D-ribose 1-diphosphate: step 5/9. In terms of biological role, IGPS catalyzes the conversion of PRFAR and glutamine to IGP, AICAR and glutamate. The HisF subunit catalyzes the cyclization activity that produces IGP and AICAR from PRFAR using the ammonia provided by the HisH subunit. The chain is Imidazole glycerol phosphate synthase subunit HisF from Acidithiobacillus ferrooxidans (strain ATCC 23270 / DSM 14882 / CIP 104768 / NCIMB 8455) (Ferrobacillus ferrooxidans (strain ATCC 23270)).